We begin with the raw amino-acid sequence, 514 residues long: Myocyte-specific enhancer factor 2D (514 aa).

The 55-residue stretch at 3 to 57 (RKKIQIQRITDERNRQVTFTKRKFGLMKKAYELSVLCDCEIALIIFNHSNKLFQY) folds into the MADS-box domain. The segment at residues 58–86 (ASTDMDKVLLKYTEYNEPHESRTNADIIE) is a DNA-binding region (mef2-type). Phosphoserine occurs at positions 97, 98, and 106. Residue L107 is modified to Phosphothreonine. S110 carries the post-translational modification Phosphoserine. Residue S121 is modified to Phosphoserine; by PKA. Residues 174-207 (TDPRLLSPQQPALQRNSVSPGLPQRPASAGAMLG) are disordered. S180 bears the Phosphoserine; by MAPK7 mark. The span at 180-192 (SPQQPALQRNSVS) shows a compositional bias: polar residues. Phosphoserine; by PKA is present on S190. Phosphoserine is present on S231. Residues 244–269 (NKVIPAKSPPPPTHNTQLGAPSRKPD) are disordered. K245 bears the N6-acetyllysine mark. Residue S251 is modified to Phosphoserine. The segment at 286 to 292 (TEDHLDL) is beta domain. Disordered regions lie at residues 364-399 (WQQPQPPQQPQPPQPPQSQPQPPQPQPQQPPQQQPH) and 430-514 (SIKS…WTLK). The segment covering 367-396 (PQPPQQPQPPQPPQSQPQPPQPQPQQPPQQ) has biased composition (pro residues). The residue at position 432 (K432) is an N6-acetyllysine; alternate. K432 is covalently cross-linked (Glycyl lysine isopeptide (Lys-Gly) (interchain with G-Cter in SUMO); alternate). S437 carries the phosphoserine modification.

This sequence belongs to the MEF2 family. In terms of assembly, forms a complex with class II HDACs in undifferentiating cells. On myogenic differentiation, HDACs are released into the cytoplasm allowing MEF2s to interact with other proteins for activation. Interacts with HDAC4 (in undifferentiating cells); the interaction translocates MEF2D to nuclear dots. Forms a heterodimer with MEF2A. Interacts with MAPK7; the interaction phosphorylates but does not activate MEF2D. Interacts with MYOG. Interacts with CCAR2 and HDAC3. Phosphorylated on Ser-437 is which is required for Lys-432 sumoylation and inhibits transcriptional activity. Phosphorylation on this residue by CDK5 is dependent on p35 and calpains. Phosphorylated by PKA at Ser-121 and Ser-190 represses transcriptional activity in embryonic and postnatal skeletal muscle, and stabilizes protein levels. No in vitro phosphorylation by PKA on Thr-20. Phosphorylated and activated by CaMK4. Post-translationally, acetylated on Lys-432 by CREBBP. Acetylated by EP300. Deacetylated by SIRT1 and HDAC3. In terms of processing, sumoylated on Lys-432 with SUMO2 but not SUMO1; which inhibits transcriptional activity and myogenic activity. Desumoylated by SENP3. Proteolytically cleaved in cerebellar granule neurons by caspase 7 following neurotoxicity. Preferentially cleaves the CDK5-mediated hyperphosphorylated form which leads to neuron apoptosis and transcriptional inactivation. In terms of tissue distribution, widely expressed though mainly restricted to skeletal and cardiac muscle, brain, neurons and lymphocytes. Differentially expressed depending on if isoforms contain the beta domain or not, with the total expression of the beta domain-lacking isoforms vastly exceeding that of the beta domain-containing isoforms. Isoforms containing the beta domain are expressed primarily in skeletal and cardiac muscle and in brain. Also present in lung and testis. Splicing to include the beta domain is induced in differentiating myocytes. Isoforms lacking the beta domain are expressed less abundantly in skeletal muscle, brain and lymphocytes, and are uniquely found in ovary, liver, spleen and kidney. In embryos, the beta domain-containing and beta domain-lacking isoforms are equally expressed. Also expressed cerebellar granule neurons and other regions of the CNS. Highest levels in the olfactory bulb, cortex, hippocampus, thalamus and cerebellum.

It localises to the nucleus. Its function is as follows. Transcriptional activator which binds specifically to the MEF2 element, 5'-YTA[AT](4)TAR-3', found in numerous muscle-specific, growth factor- and stress-induced genes. Mediates cellular functions not only in skeletal and cardiac muscle development, but also in neuronal differentiation and survival. Plays diverse roles in the control of cell growth, survival and apoptosis via p38 MAPK signaling in muscle-specific and/or growth factor-related transcription. Plays a critical role in the regulation of neuronal apoptosis. The sequence is that of Myocyte-specific enhancer factor 2D (Mef2d) from Mus musculus (Mouse).